We begin with the raw amino-acid sequence, 782 residues long: MNKKHTLISLAILTALYSQQSLADLHEQCLMGVPKFSGEVVTGDVNSLPVYIEADNAEINQPNDATYQGNVDLKQGNRHLLAQSVQVKQSGNQSTPLRMAYVRNGFDYKDNQINMLGKDAEFNLDSHDGNLTNSEYEFVGRQGRGKADNITLHNNYRVMKNATFTSCLHGDNAWAVDASEIRQYVKEEYAEMWHARFKIHGVPVFYTPYLQLPIGDRRRSGLLIPSAGTSNRDGLWYAQPIYWNIAPNYDLTFTPKYMSRRGWQANGEFRYLTSIGEGKVAGEYLGKDRYSEYASDNRKRHLFYWNHNSSFLQNWRLNINYTRVSDKRYFNDFDSIYGRSTDGYANQYARIAYYQPNYNFSLSAHQFQIFDDIVNIGPYRAVPQLDFNYHKYDLANGWLNFKLHSQAVRFDNDSKLMPTAWRFHAEPSLNSLMSNKYGSLNIETKLYATRYEQKKGSGKNAEDVQKTVNRVIPQFKVDLQSVLSRDITFLKEYTQTFEPHVQYLYRPYRNQSNIGSTLNNDYLGFGYDSALVQQDYYSLFRDRRYSGLDRISSANQVTLGGTTRFYDIAGEERFNLSAGQIYYLSNSRIDENPANKTPTSSSAWALESNWKISNKWYWRGSYQFDTHTNSTSLANTSLEYNPEKNNLIQLNYRYVNQEYIDQNLGKSANAYQQDIQQVGLVVGWEIANNWAVVGRYYQDLALQKPVEQYLGVQYNSCCWAASVGVKRNVTNHQNQTRNEIVYDNSIGITLELRGLGSNDHQSGIQEMLEKGKLPYIRAFSLD.

Residues 1–23 (MNKKHTLISLAILTALYSQQSLA) form the signal peptide.

The protein belongs to the LptD family. As to quaternary structure, component of the lipopolysaccharide transport and assembly complex. Interacts with LptE and LptA.

Its subcellular location is the cell outer membrane. In terms of biological role, together with LptE, is involved in the assembly of lipopolysaccharide (LPS) at the surface of the outer membrane. This is LPS-assembly protein LptD from Haemophilus influenzae (strain 86-028NP).